The sequence spans 367 residues: Inactive serine protease 39 (367 aa).

Positions 1–31 (MWGSRAQQSGPDRGGACLLAAFLLCFSLLHA) are cleaved as a signal peptide. One can recognise a Peptidase S1 domain in the interval 68-312 (IYGGQIAKAE…FSDWIKQKKA (245 aa)). 4 disulfide bridges follow: cysteine 93/cysteine 109, cysteine 192/cysteine 269, cysteine 225/cysteine 248, and cysteine 259/cysteine 287.

It belongs to the peptidase S1 family. Expressed in testis. More specifically, abundantly expressed in the haploid round spermatid.

The protein localises to the cytoplasmic vesicle. It is found in the secretory vesicle. Its subcellular location is the acrosome. It localises to the secreted. In terms of biological role, may play an important role in the sperm/egg interaction; released during the acrosome reaction. The protein is Inactive serine protease 39 (Prss39) of Mus musculus (Mouse).